Reading from the N-terminus, the 196-residue chain is Imidazoleglycerol-phosphate dehydratase (196 aa).

It belongs to the imidazoleglycerol-phosphate dehydratase family.

Its subcellular location is the cytoplasm. It carries out the reaction D-erythro-1-(imidazol-4-yl)glycerol 3-phosphate = 3-(imidazol-4-yl)-2-oxopropyl phosphate + H2O. The protein operates within amino-acid biosynthesis; L-histidine biosynthesis; L-histidine from 5-phospho-alpha-D-ribose 1-diphosphate: step 6/9. This chain is Imidazoleglycerol-phosphate dehydratase, found in Clostridium botulinum (strain ATCC 19397 / Type A).